A 55-amino-acid chain; its full sequence is Large ribosomal subunit protein bL33 (55 aa).

Belongs to the bacterial ribosomal protein bL33 family.

This Xanthobacter autotrophicus (strain ATCC BAA-1158 / Py2) protein is Large ribosomal subunit protein bL33.